A 410-amino-acid polypeptide reads, in one-letter code: Protein translocase subunit SecY (410 aa).

9 helical membrane-spanning segments follow: residues 61 to 81 (LSVFALGIIPYINATITIQIL), 106 to 126 (ITKYLSFCFAFIESLAIVLRL), 135 to 155 (LYFIVQTTLILISGAMLVMWL), 170 to 190 (VIIFVNIASAFAKFLLNQLFV), 195 to 215 (FLDFASYFALIVFSIACIVFV), 248 to 268 (QGGVMPIILASSLLALVDYVI), 289 to 309 (ILFLLLYSAFIIFFNYLYCSL), 349 to 369 (LFGSGFLAFIVLAPNFLEFVF), and 373 to 393 (VFKGLAVSSLLIVVGVAIDLI).

This sequence belongs to the SecY/SEC61-alpha family. As to quaternary structure, component of the plastid Sec protein translocase complex, which is composed of at least SecY and SecE.

It localises to the plastid. Its subcellular location is the chloroplast thylakoid membrane. The central subunit of the protein translocation channel SecYE. Consists of two halves formed by TMs 1-5 and 6-10. These two domains form a lateral gate at the front which open onto the bilayer between TMs 2 and 7, and are clamped together by SecE at the back. The channel is closed by both a pore ring composed of hydrophobic SecY resides and a short helix (helix 2A) on the extracellular side of the membrane which forms a plug. This chain is Protein translocase subunit SecY, found in Cyanidium caldarium (Red alga).